Consider the following 271-residue polypeptide: MNTPEDSSLGREVAYPSGYDPSLLFPIPRAAGRAAIGLRGALPFVGRDRWHAYELSWLDAHGKPCVATATLHVPCESPALIESKSLKLYLNSLNATRFNSAEAVRARIATDLSTRAGADVSVEFGLPPIDAVGEGESIDALDIAIDDYGPPKADYLATHAGTVVEEVLASALLKSNCPVTGQPDWASVTLRYRGAPIDREGLLRYLVSFRDHADFHEQCVERIFQDLLVRCAPQWLVVEARYTRRGGLDINPVRTSPQMPTPLSIFRDLRQ.

A substrate-binding site is contributed by 81–83 (IES). NADPH is bound at residue 83–84 (SK). Cys-177 serves as the catalytic Thioimide intermediate. Asp-184 (proton donor) is an active-site residue. 216–217 (HE) lines the substrate pocket. 245–246 (RG) contributes to the NADPH binding site.

The protein belongs to the GTP cyclohydrolase I family. QueF type 2 subfamily. As to quaternary structure, homodimer.

The protein resides in the cytoplasm. It carries out the reaction 7-aminomethyl-7-carbaguanine + 2 NADP(+) = 7-cyano-7-deazaguanine + 2 NADPH + 3 H(+). It functions in the pathway tRNA modification; tRNA-queuosine biosynthesis. Its function is as follows. Catalyzes the NADPH-dependent reduction of 7-cyano-7-deazaguanine (preQ0) to 7-aminomethyl-7-deazaguanine (preQ1). The sequence is that of NADPH-dependent 7-cyano-7-deazaguanine reductase from Xanthomonas campestris pv. campestris (strain 8004).